A 471-amino-acid polypeptide reads, in one-letter code: Delta(24(24(1)))-sterol reductase erg4A (471 aa).

N-linked (GlcNAc...) asparagine glycosylation occurs at N15. 8 helical membrane passes run 33 to 53 (VTLIMIGFPLLMYYMYIGAVL), 89 to 109 (WTIYWTFLILEGAGYLYLPGV), 130 to 150 (AVSSWYLTIAAALILHFTGVL), 159 to 179 (FGPLMSVAICSGIFVSIVAYI), 216 to 236 (MFFEVRIPWFILFLLTLGTAL), 244 to 264 (LVAGEVLFLLMAHFLYANACA), 282 to 302 (GFMLIFWNLAGVPMSYCHCTL), and 313 to 333 (HWNPWVLAVWAVAYLFMYWVW). NADP(+) contacts are provided by residues K340, R344, L380, and 392–393 (HY). Residues 397 to 417 (VFFAISWGLITGFNSPFPWFY) form a helical membrane-spanning segment. Residues D432, 436 to 440 (CRERY), and Y447 contribute to the NADP(+) site.

This sequence belongs to the ERG4/ERG24 family.

The protein localises to the endoplasmic reticulum membrane. It catalyses the reaction ergosterol + NADP(+) = ergosta-5,7,22,24(28)-tetraen-3beta-ol + NADPH + H(+). Its pathway is steroid metabolism; ergosterol biosynthesis. Functionally, delta(24(24(1)))-sterol reductase; part of the third module of ergosterol biosynthesis pathway that includes the late steps of the pathway. Catalyzes the last step of ergosterol biosynthesis by converting ergosta-5,7,22,24(28)-tetraen-3beta-ol into ergosterol. The third module or late pathway involves the ergosterol synthesis itself through consecutive reactions that mainly occur in the endoplasmic reticulum (ER) membrane. Firstly, the squalene synthase erg9 catalyzes the condensation of 2 farnesyl pyrophosphate moieties to form squalene, which is the precursor of all steroids. Squalene synthase is crucial for balancing the incorporation of farnesyl diphosphate (FPP) into sterol and nonsterol isoprene synthesis. Secondly, squalene is converted into lanosterol by the consecutive action of the squalene epoxidase erg1 and the lanosterol synthase erg7. Then, the delta(24)-sterol C-methyltransferase erg6 methylates lanosterol at C-24 to produce eburicol. Eburicol is the substrate of the sterol 14-alpha demethylase encoded by cyp51A and cyp51B, to yield 4,4,24-trimethyl ergosta-8,14,24(28)-trienol. The C-14 reductase erg24 then reduces the C14=C15 double bond which leads to 4,4-dimethylfecosterol. A sequence of further demethylations at C-4, involving the C-4 demethylation complex containing the C-4 methylsterol oxidases erg25A or erg25B, the sterol-4-alpha-carboxylate 3-dehydrogenase erg26 and the 3-keto-steroid reductase erg27, leads to the production of fecosterol via 4-methylfecosterol. The C-8 sterol isomerase erg2 then catalyzes the reaction which results in unsaturation at C-7 in the B ring of sterols and thus converts fecosterol to episterol. The sterol-C5-desaturase erg3B then catalyzes the introduction of a C-5 double bond in the B ring to produce 5-dehydroepisterol. The 2 other sterol-C5-desaturases, erg3A and erg3C, seem to be less important in ergosterol biosynthesis. The C-22 sterol desaturase erg5 further converts 5-dehydroepisterol into ergosta-5,7,22,24(28)-tetraen-3beta-ol by forming the C-22(23) double bond in the sterol side chain. Finally, ergosta-5,7,22,24(28)-tetraen-3beta-ol is substrate of the C-24(28) sterol reductases erg4A and erg4B to produce ergosterol. Possible alternative sterol biosynthetic pathways might exist from fecosterol to ergosterol, depending on the activities of the erg3 isoforms. This is Delta(24(24(1)))-sterol reductase erg4A from Aspergillus fumigatus (strain ATCC MYA-4609 / CBS 101355 / FGSC A1100 / Af293) (Neosartorya fumigata).